A 496-amino-acid polypeptide reads, in one-letter code: Lysine--tRNA ligase (496 aa).

Mg(2+)-binding residues include glutamate 403 and glutamate 410.

It belongs to the class-II aminoacyl-tRNA synthetase family. In terms of assembly, homodimer. The cofactor is Mg(2+).

It is found in the cytoplasm. The catalysed reaction is tRNA(Lys) + L-lysine + ATP = L-lysyl-tRNA(Lys) + AMP + diphosphate. The polypeptide is Lysine--tRNA ligase (Aster yellows witches'-broom phytoplasma (strain AYWB)).